The primary structure comprises 87 residues: Small polypeptide ROTUNDIFOLIA LIKE 2 (87 aa).

The helical transmembrane segment at 19–35 (LIPHTSHYILQLVYLHL) threads the bilayer. Residues 56 to 87 (GQMGRLNRAFREKRARFYIFRRCVIMLLRWSD) are required for DVL/RTFL small polypeptide activity.

This sequence belongs to the DVL/RTFL small polypeptides family.

It is found in the cell membrane. Its function is as follows. Small polypeptide acting as a regulatory molecule which coordinates cellular responses required for differentiation, growth and development, probably by restricting polar cell proliferation in lateral organs. The protein is Small polypeptide ROTUNDIFOLIA LIKE 2 of Oryza sativa subsp. japonica (Rice).